Reading from the N-terminus, the 280-residue chain is Aspartate/glutamate leucyltransferase (280 aa).

This sequence belongs to the R-transferase family. Bpt subfamily.

It is found in the cytoplasm. The catalysed reaction is N-terminal L-glutamyl-[protein] + L-leucyl-tRNA(Leu) = N-terminal L-leucyl-L-glutamyl-[protein] + tRNA(Leu) + H(+). The enzyme catalyses N-terminal L-aspartyl-[protein] + L-leucyl-tRNA(Leu) = N-terminal L-leucyl-L-aspartyl-[protein] + tRNA(Leu) + H(+). Functions in the N-end rule pathway of protein degradation where it conjugates Leu from its aminoacyl-tRNA to the N-termini of proteins containing an N-terminal aspartate or glutamate. This is Aspartate/glutamate leucyltransferase from Cereibacter sphaeroides (strain ATCC 17023 / DSM 158 / JCM 6121 / CCUG 31486 / LMG 2827 / NBRC 12203 / NCIMB 8253 / ATH 2.4.1.) (Rhodobacter sphaeroides).